We begin with the raw amino-acid sequence, 730 residues long: Catalase-peroxidase (730 aa).

Residues 1-11 are compositionally biased toward basic and acidic residues; it reads MDAKTDDKDAG. The N-terminal stretch at 1-21 is a signal peptide; sequence MDAKTDDKDAGKCPFSSGSHA. The interval 1–24 is disordered; sequence MDAKTDDKDAGKCPFSSGSHAHRN. A cross-link (tryptophyl-tyrosyl-methioninium (Trp-Tyr) (with M-244)) is located at residues 96-218; it reads WHSAGTYRIS…LGAVQMGLIY (123 aa). Catalysis depends on His-97, which acts as the Proton acceptor. Positions 218-244 form a cross-link, tryptophyl-tyrosyl-methioninium (Tyr-Met) (with W-96); the sequence is YVNPEGPNGNPDPVGSAKDIRETFYRM. His-259 contributes to the heme b binding site.

The protein belongs to the peroxidase family. Peroxidase/catalase subfamily. In terms of assembly, homodimer or homotetramer. The cofactor is heme b. Post-translationally, formation of the three residue Trp-Tyr-Met cross-link is important for the catalase, but not the peroxidase activity of the enzyme.

The catalysed reaction is H2O2 + AH2 = A + 2 H2O. It catalyses the reaction 2 H2O2 = O2 + 2 H2O. In terms of biological role, bifunctional enzyme with both catalase and broad-spectrum peroxidase activity. This chain is Catalase-peroxidase, found in Rhodopseudomonas palustris (strain BisA53).